A 603-amino-acid chain; its full sequence is ATP-dependent zinc metalloprotease FtsH (603 aa).

At 1 to 2 (MK) the chain is on the stromal side. The chain crosses the membrane as a helical span at residues 3 to 23 (NLWIWSLPLIVLAFIGWQELA). At 24–101 (NQMPVATSRM…DVDVHAVSNW (78 aa)) the chain is on the lumenal side. A helical membrane pass occupies residues 102–122 (INVASNWIIPLIIIGVVIWLL). The Stromal portion of the chain corresponds to 123–603 (SRSASSNTTG…SQAARLTAVN (481 aa)). Residue 194-201 (GPPGTGKT) coordinates ATP. Residue histidine 415 coordinates Zn(2+). The active site involves glutamate 416. Positions 419 and 493 each coordinate Zn(2+).

In the central section; belongs to the AAA ATPase family. This sequence in the C-terminal section; belongs to the peptidase M41 family. As to quaternary structure, homohexamer. It depends on Zn(2+) as a cofactor.

Its subcellular location is the plastid. The protein localises to the chloroplast thylakoid membrane. In terms of biological role, acts as a processive, ATP-dependent zinc metallopeptidase. The protein is ATP-dependent zinc metalloprotease FtsH of Cyanidioschyzon merolae (strain NIES-3377 / 10D) (Unicellular red alga).